Consider the following 67-residue polypeptide: uncharacterized protein (67 aa).

Residues 19–39 form a helical membrane-spanning segment; it reads ISFIIFFFFYFFFFYFFYGFW.

It is found in the membrane. This is an uncharacterized protein from Dictyostelium discoideum (Social amoeba).